The chain runs to 286 residues: NADPH-dependent 7-cyano-7-deazaguanine reductase (286 aa).

88–90 is a substrate binding site; the sequence is VES. Residue 90-91 coordinates NADPH; the sequence is SK. C194 serves as the catalytic Thioimide intermediate. Residue D201 is the Proton donor of the active site. 233 to 234 is a binding site for substrate; that stretch reads HE. Residue 262 to 263 coordinates NADPH; sequence RG.

Belongs to the GTP cyclohydrolase I family. QueF type 2 subfamily. In terms of assembly, homodimer.

The protein resides in the cytoplasm. The catalysed reaction is 7-aminomethyl-7-carbaguanine + 2 NADP(+) = 7-cyano-7-deazaguanine + 2 NADPH + 3 H(+). It functions in the pathway tRNA modification; tRNA-queuosine biosynthesis. Functionally, catalyzes the NADPH-dependent reduction of 7-cyano-7-deazaguanine (preQ0) to 7-aminomethyl-7-deazaguanine (preQ1). This Colwellia psychrerythraea (strain 34H / ATCC BAA-681) (Vibrio psychroerythus) protein is NADPH-dependent 7-cyano-7-deazaguanine reductase.